The following is a 1031-amino-acid chain: MMS19 nucleotide excision repair protein homolog (1031 aa).

The residue at position 2 (A2) is an N-acetylalanine. HEAT repeat units follow at residues 867–905, 909–947, 950–988, and 991–1029; these read QRFFTDNVPALVQGFHAAPQDVKPNYLKGLSHVLNRLPK, LPELPTLLSLLLEALSCPDSVVQLSTLSCLQPLLLEAPQ, SLHVDTLVTKFLNLSSSYSMAVRIAALQCMHALTRLPTS, and LPYKSQVIRALAKPLDDKKRLVRKEAVSARGEWFLLGSP. S1028 is subject to Phosphoserine.

This sequence belongs to the MET18/MMS19 family. Component of the CIA complex. In the CIA complex, interacts directly with CIAO2B and CIAO3. Component of the MMXD complex, composed of CIAO1, ERCC2, CIAO2B, MMS19 and SLC25A5. Interacts with CIAO2B; the interaction is direct. Interacts with ERCC2/XPD; the interaction is direct. Interacts with ERCC3/XPB and NCOA3/RAC3. Interacts with RTEL1; the interaction mediates the association of RTEL1 with the CIA complex. Interacts with BRIP1. Interacts with KIF4A; the interaction facilitates the transfer of Fe-S clusters to KIF4A to ensure proper localization of KIF4A to the mitotic machinery components. Interacts with CCDC117; the interaction is indirect. In terms of processing, ubiquitinated; undergoes 'Lys-48'-linked polyubiquitination. In terms of tissue distribution, ubiquitously expressed with higher expression in testis.

Its subcellular location is the nucleus. It localises to the cytoplasm. The protein localises to the cytoskeleton. The protein resides in the spindle. Key component of the cytosolic iron-sulfur protein assembly (CIA) complex, a multiprotein complex that mediates the incorporation of iron-sulfur cluster into apoproteins specifically involved in DNA metabolism and genomic integrity. In the CIA complex, MMS19 acts as an adapter between early-acting CIA components and a subset of cellular target Fe/S proteins such as ERCC2/XPD, FANCJ and RTEL1, thereby playing a key role in nucleotide excision repair (NER), homologous recombination-mediated double-strand break DNA repair, DNA replication and RNA polymerase II (POL II) transcription. As a CIA complex component and in collaboration with CIAO1 and CIAO2, binds to and facilitates the assembly of most cytosolic-nuclear Fe/S proteins. As part of the mitotic spindle-associated MMXD complex, plays a role in chromosome segregation, probably by facilitating iron-sulfur cluster assembly into ERCC2/XPD. Together with CIAO2, facilitates the transfer of Fe-S clusters to the motor protein KIF4A, which ensures proper localization of KIF4A to mitotic machinery components to promote the progression of mitosis. Indirectly acts as a transcriptional coactivator of estrogen receptor (ER), via its role in iron-sulfur insertion into some component of the TFIIH-machinery. This chain is MMS19 nucleotide excision repair protein homolog, found in Mus musculus (Mouse).